A 761-amino-acid chain; its full sequence is Protein transport protein SEC23 C (761 aa).

Residues Cys-60, Cys-63, Cys-82, and Cys-85 each contribute to the Zn(2+) site. A zinc finger-like region spans residues 60 to 85 (CRTCRSVLNPYSVVDFSACNWGCPFC).

The protein belongs to the SEC23/SEC24 family. SEC24 subfamily. Component of the coat protein complex II (COPII), composed of at least five proteins: the Sec23/24 complex, the Sec13/31 complex and Sar1.

The protein resides in the cytoplasmic vesicle. It is found in the COPII-coated vesicle membrane. The protein localises to the endoplasmic reticulum membrane. Its subcellular location is the membrane. Its function is as follows. Component of the coat protein complex II (COPII) which promotes the formation of transport vesicles from the endoplasmic reticulum (ER). The coat has two main functions, the physical deformation of the endoplasmic reticulum membrane into vesicles and the selection of cargo molecules. This Arabidopsis thaliana (Mouse-ear cress) protein is Protein transport protein SEC23 C.